The chain runs to 556 residues: Protein F37C4.5 (556 aa).

Ala-2 is modified (N-acetylalanine).

This chain is Protein F37C4.5, found in Caenorhabditis elegans.